The following is a 159-amino-acid chain: Cyclic pyranopterin monophosphate synthase (159 aa).

Substrate contacts are provided by residues 75 to 77 (LCH) and 113 to 114 (ME). The active site involves aspartate 128.

Belongs to the MoaC family. Homohexamer; trimer of dimers.

It catalyses the reaction (8S)-3',8-cyclo-7,8-dihydroguanosine 5'-triphosphate = cyclic pyranopterin phosphate + diphosphate. It functions in the pathway cofactor biosynthesis; molybdopterin biosynthesis. In terms of biological role, catalyzes the conversion of (8S)-3',8-cyclo-7,8-dihydroguanosine 5'-triphosphate to cyclic pyranopterin monophosphate (cPMP). This is Cyclic pyranopterin monophosphate synthase from Thiobacillus denitrificans (strain ATCC 25259 / T1).